We begin with the raw amino-acid sequence, 357 residues long: MSPSPFAPTIETIDYPFPPKPIPLSDAEKADYKARIKQLLIEKDAVLVAHYYTDPEIQALAEETGGCVSDSLEMARFGRDHPAKTLIVAGVKFMGETAKILSPEKTILMPTLEATCSLDLGCPIDKFSAFCDAHPDHTVVVYANTSAAVKARADWVVTSSIALEIVEHLDSEGKKIIWGPDRHLGSYIAKQTGAEMLMWQGDCIVHDEFKANALRDLKRVYPDAAILVHPESPASVVAMADAVGSTSQLIKAAQTMANERFIVATDRGIFYKMQQAAPGKTLIEAPTGGNGATCKSCAHCPWMAMNGLKAIEASLSDSDKTTHEIFVDEDLRVKALIPLTRMLDFAKTLNMKVKGNA.

The iminosuccinate site is built by His-50 and Ser-71. Cys-116 serves as a coordination point for [4Fe-4S] cluster. Iminosuccinate contacts are provided by residues 142–144 and Ser-159; that span reads YAN. Position 203 (Cys-203) interacts with [4Fe-4S] cluster. Residues 229 to 231 and Thr-246 contribute to the iminosuccinate site; that span reads HPE. Residue Cys-300 coordinates [4Fe-4S] cluster.

It belongs to the quinolinate synthase family. Type 1 subfamily. [4Fe-4S] cluster serves as cofactor.

It localises to the cytoplasm. The catalysed reaction is iminosuccinate + dihydroxyacetone phosphate = quinolinate + phosphate + 2 H2O + H(+). It functions in the pathway cofactor biosynthesis; NAD(+) biosynthesis; quinolinate from iminoaspartate: step 1/1. In terms of biological role, catalyzes the condensation of iminoaspartate with dihydroxyacetone phosphate to form quinolinate. This chain is Quinolinate synthase, found in Shewanella sp. (strain MR-4).